The following is a 341-amino-acid chain: UDP-3-O-acylglucosamine N-acyltransferase (341 aa).

Residue His-241 is the Proton acceptor of the active site.

It belongs to the transferase hexapeptide repeat family. LpxD subfamily. As to quaternary structure, homotrimer.

It carries out the reaction a UDP-3-O-[(3R)-3-hydroxyacyl]-alpha-D-glucosamine + a (3R)-hydroxyacyl-[ACP] = a UDP-2-N,3-O-bis[(3R)-3-hydroxyacyl]-alpha-D-glucosamine + holo-[ACP] + H(+). The protein operates within bacterial outer membrane biogenesis; LPS lipid A biosynthesis. Its function is as follows. Catalyzes the N-acylation of UDP-3-O-acylglucosamine using 3-hydroxyacyl-ACP as the acyl donor. Is involved in the biosynthesis of lipid A, a phosphorylated glycolipid that anchors the lipopolysaccharide to the outer membrane of the cell. The sequence is that of UDP-3-O-acylglucosamine N-acyltransferase from Haemophilus ducreyi (strain 35000HP / ATCC 700724).